A 301-amino-acid polypeptide reads, in one-letter code: uncharacterized protein (301 aa).

Residues 16–28 (EITEESEKTKTDL) are compositionally biased toward basic and acidic residues. A disordered region spans residues 16–38 (EITEESEKTKTDLQKANTPNKTE). Residues 29-38 (QKANTPNKTE) are compositionally biased toward polar residues. The G-patch domain occupies 252–301 (KENVALKMLQRCGWKEGQGLGQHNQGIINPLHVEISGFVTETKHSKINDK).

This is an uncharacterized protein from Schizosaccharomyces pombe (strain 972 / ATCC 24843) (Fission yeast).